A 371-amino-acid chain; its full sequence is Chaperone protein DnaJ (371 aa).

The J domain maps to 5-69; sequence DYYEILGIAK…QKRAAYDQHG (65 aa). The CR-type zinc finger occupies 127-205; the sequence is GASKEIHITT…CRGQGKVEEP (79 aa). The Zn(2+) site is built by Cys140, Cys143, Cys157, Cys160, Cys179, Cys182, Cys193, and Cys196. 4 CXXCXGXG motif repeats span residues 140–147, 157–164, 179–186, and 193–200; these read CEHCKGSG, CTTCRGVG, CPRCHGQG, and CRQCRGQG.

Belongs to the DnaJ family. As to quaternary structure, homodimer. Zn(2+) is required as a cofactor.

It localises to the cytoplasm. Its function is as follows. Participates actively in the response to hyperosmotic and heat shock by preventing the aggregation of stress-denatured proteins and by disaggregating proteins, also in an autonomous, DnaK-independent fashion. Unfolded proteins bind initially to DnaJ; upon interaction with the DnaJ-bound protein, DnaK hydrolyzes its bound ATP, resulting in the formation of a stable complex. GrpE releases ADP from DnaK; ATP binding to DnaK triggers the release of the substrate protein, thus completing the reaction cycle. Several rounds of ATP-dependent interactions between DnaJ, DnaK and GrpE are required for fully efficient folding. Also involved, together with DnaK and GrpE, in the DNA replication of plasmids through activation of initiation proteins. The protein is Chaperone protein DnaJ of Hamiltonella defensa subsp. Acyrthosiphon pisum (strain 5AT).